Consider the following 160-residue polypeptide: MGVTKKPDLNDPVLRAKLAKGMGHNYYGEPAWPNDLLYIFPVVILGTIACNVGLAVLEPSMIGEPADPFATPLEILPEWYFFPVFQILRTVPNKLLGVFLMVSVPAGLLTVPFLENVNKFQNPFRRPVATTVFLIGTAVALWLGIGATLPIDKSLTLGLF.

The next 3 helical transmembrane spans lie at 36 to 56 (LLYI…GLAV), 95 to 115 (LLGV…PFLE), and 131 to 151 (TVFL…TLPI).

Belongs to the cytochrome b family. PetD subfamily. As to quaternary structure, the 4 large subunits of the cytochrome b6-f complex are cytochrome b6, subunit IV (17 kDa polypeptide, petD), cytochrome f and the Rieske protein, while the 4 small subunits are petG, petL, petM and petN. The complex functions as a dimer.

Its subcellular location is the plastid. It is found in the chloroplast thylakoid membrane. Functionally, component of the cytochrome b6-f complex, which mediates electron transfer between photosystem II (PSII) and photosystem I (PSI), cyclic electron flow around PSI, and state transitions. The sequence is that of Cytochrome b6-f complex subunit 4 from Gossypium barbadense (Sea Island cotton).